A 275-amino-acid polypeptide reads, in one-letter code: Adenylate kinase (275 aa).

54-59 (GAGKGT) is an ATP binding site. Residues 74–103 (ATGDMLRSQVAKKTPLGREAKKIMDQGGLV) are NMP. AMP is bound by residues threonine 75, arginine 80, 101–103 (GLV), 130–133 (GFPR), and glutamine 137. The LID stretch occupies residues 171-208 (GRLVHPASGRSYHRVFNPPKADMKDDITGEPLVSRSDD). Residues arginine 172 and 181 to 182 (SY) contribute to the ATP site. 2 residues coordinate AMP: arginine 205 and arginine 216. Glutamine 244 serves as a coordination point for ATP.

Belongs to the adenylate kinase family. AK2 subfamily. Monomer.

It localises to the cytoplasm. Its subcellular location is the cytosol. The protein localises to the mitochondrion intermembrane space. It catalyses the reaction AMP + ATP = 2 ADP. Its function is as follows. Catalyzes the reversible transfer of the terminal phosphate group between ATP and AMP. Plays an important role in cellular energy homeostasis and in adenine nucleotide metabolism. Adenylate kinase activity is critical for regulation of the phosphate utilization and the AMP de novo biosynthesis pathways. In Botryotinia fuckeliana (strain B05.10) (Noble rot fungus), this protein is Adenylate kinase (adk1).